A 1793-amino-acid chain; its full sequence is Transposon Ty1-H Gag-Pol polyprotein (1793 aa).

3 stretches are compositionally biased toward polar residues: residues 1-10, 48-60, and 127-152; these read MESQQLSNYP, TKAN…TPAS, and QSQF…GNTF. 3 disordered regions span residues 1-84, 126-174, and 390-459; these read MESQ…QNGP, PQSQ…PPPM, and GSRN…SKST. The span at 153–165 shows a compositional bias: low complexity; that stretch reads TDSSSADSDMTST. The interval 337-439 is RNA-binding; sequence NNGIHINNKV…NSKSKTARAH (103 aa). Residues 440–456 are compositionally biased toward low complexity; sequence NVSTSNNSPSTDNDSIS. The active-site For protease activity; shared with dimeric partner is the Asp499. The integrase-type zinc finger-like stretch occupies residues 621–678; it reads NVHTSESTRKYPYPFIHRMLAHANAQTIRYSLKNNTITYFNESDVDWSSAIDYQCPDC. One can recognise an Integrase catalytic domain in the interval 698–873; it reads NSYEPFQYLH…AGLDISTLLP (176 aa). Asp709 and Asp774 together coordinate Mg(2+). The segment at 996-1208 is disordered; that stretch reads AVSPTDSTPP…SSLGGIGDSN (213 aa). Residues 998-1007 show a composition bias toward low complexity; that stretch reads SPTDSTPPST. Residues 1043–1053 are compositionally biased toward polar residues; sequence STPQISDIEST. A compositionally biased stretch (basic and acidic residues) spans 1076-1091; it reads ESSHASKSKDFRHSDS. 2 stretches are compositionally biased toward polar residues: residues 1092–1120 and 1133–1144; these read YSDN…QTSE and SIDTSSSESNSL. A Bipartite nuclear localization signal motif is present at residues 1216-1250; the sequence is KKRSLEDNETEIKVSRDTWNTKNMRSLEPPRSKKR. The Reverse transcriptase Ty1/copia-type domain occupies 1376–1514; sequence NNYYITQLDI…DILGLEIKYQ (139 aa). Mg(2+) is bound by residues Asp1384, Asp1465, Asp1466, Asp1648, Glu1690, and Asp1723. One can recognise an RNase H Ty1/copia-type domain in the interval 1648–1790; it reads DASYGNQPYY…IKTFKLLTNK (143 aa).

As to quaternary structure, the capsid protein forms a homotrimer, from which the VLPs are assembled. The protease is a homodimer, whose active site consists of two apposed aspartic acid residues. In terms of processing, initially, virus-like particles (VLPs) are composed of the structural unprocessed proteins Gag and Gag-Pol, and also contain the host initiator methionine tRNA (tRNA(i)-Met) which serves as a primer for minus-strand DNA synthesis, and a dimer of genomic Ty RNA. Processing of the polyproteins occurs within the particle and proceeds by an ordered pathway, called maturation. First, the protease (PR) is released by autocatalytic cleavage of the Gag-Pol polyprotein yielding capsid protein p45 and a Pol-p154 precursor protein. This cleavage is a prerequisite for subsequent processing of Pol-p154 at the remaining sites to release the mature structural and catalytic proteins. Maturation takes place prior to the RT reaction and is required to produce transposition-competent VLPs.

The protein resides in the cytoplasm. It is found in the nucleus. It carries out the reaction DNA(n) + a 2'-deoxyribonucleoside 5'-triphosphate = DNA(n+1) + diphosphate. It catalyses the reaction Endonucleolytic cleavage to 5'-phosphomonoester.. Capsid protein (CA) is the structural component of the virus-like particle (VLP), forming the shell that encapsulates the retrotransposons dimeric RNA genome. The particles are assembled from trimer-clustered units and there are holes in the capsid shells that allow for the diffusion of macromolecules. CA also has nucleocapsid-like chaperone activity, promoting primer tRNA(i)-Met annealing to the multipartite primer-binding site (PBS), dimerization of Ty1 RNA and initiation of reverse transcription. In terms of biological role, the aspartyl protease (PR) mediates the proteolytic cleavages of the Gag and Gag-Pol polyproteins after assembly of the VLP. Its function is as follows. Reverse transcriptase/ribonuclease H (RT) is a multifunctional enzyme that catalyzes the conversion of the retro-elements RNA genome into dsDNA within the VLP. The enzyme displays a DNA polymerase activity that can copy either DNA or RNA templates, and a ribonuclease H (RNase H) activity that cleaves the RNA strand of RNA-DNA heteroduplexes during plus-strand synthesis and hydrolyzes RNA primers. The conversion leads to a linear dsDNA copy of the retrotransposon that includes long terminal repeats (LTRs) at both ends. Functionally, integrase (IN) targets the VLP to the nucleus, where a subparticle preintegration complex (PIC) containing at least integrase and the newly synthesized dsDNA copy of the retrotransposon must transit the nuclear membrane. Once in the nucleus, integrase performs the integration of the dsDNA into the host genome. In Saccharomyces cerevisiae (strain ATCC 204508 / S288c) (Baker's yeast), this protein is Transposon Ty1-H Gag-Pol polyprotein (TY1B-H).